A 307-amino-acid polypeptide reads, in one-letter code: Myeloid-associated differentiation marker-like protein 2 (307 aa).

MARVEL domains are found at residues 17–154 (AVTS…ARPG) and 159–303 (YMAT…RIRF). 7 helical membrane passes run 53 to 73 (FCVAAWGFCFALSVLVVACEF), 90 to 110 (AFAMLATLLSATAAVIYPLYF), 129 to 149 (LAASVFAGLLFLAYATEVALT), 163 to 183 (VSGLLKIVQAFVACIIFGALV), 198 to 218 (VAVYSLCFLATVVVVILSVLG), 232 to 252 (VVYTFLAVLLYLSAAVIWPVF), and 278 to 298 (LVVATFTYVNLLLYVADLAYS).

The protein belongs to the MAL family.

The protein resides in the membrane. This is Myeloid-associated differentiation marker-like protein 2 (MYADML2) from Bos taurus (Bovine).